A 1202-amino-acid chain; its full sequence is Protein HASTY 1 (1202 aa).

M1 carries the N-acetylmethionine modification.

The protein belongs to the exportin family. In terms of assembly, interacts with RAN1. In terms of tissue distribution, expressed in roots, leaves and floral buds.

Its subcellular location is the nucleus. Its function is as follows. Nucleocytoplasmic transporter involved in the nuclear export of microRNAs (miRNAs). Required for several miRNAs accumulation. Specifically required for miR156 accumulation which targets SPL3, SPL4 and SPL5 transcription factors. Involved in plant development through its role in miRNAs processing. Required for vegetative phase change and vegetative to reproductive phase transition. Functionally dependent on RAN1 binding. Does not seem to be involved in small interfering RNAs (siRNAs) processing. This chain is Protein HASTY 1 (HST1), found in Arabidopsis thaliana (Mouse-ear cress).